The sequence spans 304 residues: Coenzyme PQQ synthesis protein B (304 aa).

The protein belongs to the PqqB family.

It functions in the pathway cofactor biosynthesis; pyrroloquinoline quinone biosynthesis. Its function is as follows. May be involved in the transport of PQQ or its precursor to the periplasm. The sequence is that of Coenzyme PQQ synthesis protein B from Stutzerimonas stutzeri (Pseudomonas stutzeri).